Here is an 897-residue protein sequence, read N- to C-terminus: Transportin-2 (897 aa).

20 HEAT repeats span residues 9-36 (GLQQVLQLLKDSQSPNTATQRIVQDKLK), 41-79 (FPDFNNYLIFVLTRLKSEDEPTRSLSGLILKNNVKAHYQ), 88-121 (FIKQECLNNIGDASSLIRATIGILITTIASKGEL), 127-164 (LLPQLCNLLNSEDYNTCEGAFGALQKICEDSSELLDSD), 171-201 (NIMIPKFLQFFKHCSPKIRSHAIACVNQFIM), 214-241 (FIEHLFALAVDDDPEVRKNVCRALVMLL), 253-280 (HSIIQYMLQRTQDHDENVALEACEFWLT), 296-386 (VQLI…LANV), 394-422 (HLLPLLKGLLFHPEWVVKESGILVLGAIA), 434-461 (PELIPHLIQCLSDKKALVRSIACWTLSR), 475-508 (LKPLMTELLKRILDGNKRVQEAACSAFATLEEEA), 516-549 (LSYILDTLVFAFGKYQHKNLLILYDAIGTLADSV), 557-595 (EYIQKLMPPLIQKWNELKDEDKDLFPLLECLSSVATALQ), 603-654 (EPVY…GLGG), 665-696 (IMTLLFQCMQDSMPEVRQSSFALLGDLTKACF), 704-737 (AEFMPILGTNLNPEFISVCNNATWAIGEICMQMG), 745-790 (QMVL…YVCP), 798-831 (QQFIRPWCTSLRNIRDNEEKDSAFRGICMMIGVN), 840-871 (IFFCDAVASWVSPKDDLRDMFYKILHGFKDQV), and 874-894 (DNWQQFSEQFPPLLKERLAAF). The 69-residue stretch at 31–99 (VQDKLKQLNQ…KQECLNNIGD (69 aa)) folds into the Importin N-terminal domain. Residues 325–364 (AVPDSEQDIKPRFHKSRTVTLPHEAERPDGSEDAEDDDDD) form a disordered region. Positions 355-364 (SEDAEDDDDD) are enriched in acidic residues. Lys-862 carries the N6-acetyllysine modification.

The protein belongs to the importin beta family. Importin beta-2 subfamily.

Its subcellular location is the cytoplasm. It is found in the nucleus. Probably functions in nuclear protein import as nuclear transport receptor. Serves as receptor for nuclear localization signals (NLS) in cargo substrates. Is thought to mediate docking of the importin/substrate complex to the nuclear pore complex (NPC) through binding to nucleoporin and the complex is subsequently translocated through the pore by an energy requiring, Ran-dependent mechanism. At the nucleoplasmic side of the NPC, Ran binds to the importin, the importin/substrate complex dissociates and importin is re-exported from the nucleus to the cytoplasm where GTP hydrolysis releases Ran. The directionality of nuclear import is thought to be conferred by an asymmetric distribution of the GTP- and GDP-bound forms of Ran between the cytoplasm and nucleus. This Homo sapiens (Human) protein is Transportin-2 (TNPO2).